Consider the following 1533-residue polypeptide: Protein TALPID3 (1533 aa).

Positions 32 to 57 (LSANKRLPVGTGTSLNGTSRGSSDLT) are disordered. A compositionally biased stretch (polar residues) spans 42–57 (TGTSLNGTSRGSSDLT). The stretch at 182–223 (QSDLEAKVNSVTELLSKLQETDKHLQRVTEQQTSIQRKQEKL) forms a coiled coil. The span at 309-321 (KEVEDTSFDKQKS) shows a compositional bias: basic and acidic residues. 2 disordered regions span residues 309–339 (KEVEDTSFDKQKSPLETPAPRRFAPVPVSRD) and 377–400 (LTRKSESSNTTSLTRSKIGWTPEK). Phosphoserine is present on S406. A coiled-coil region spans residues 467 to 501 (SVLKDAEKILRGVQNNKKVLEENLEAIIRAKDGAA). The required for centrosomal localization stretch occupies residues 467–554 (SVLKDAEKIL…YEQKRFDQKN (88 aa)). The segment at 546-575 (EQKRFDQKNQRTKKGQNMTKDIRTNTQDKT) is disordered. Residues 560–575 (GQNMTKDIRTNTQDKT) are compositionally biased toward polar residues. A phosphothreonine mark is found at T1042 and T1046. Position 1050 is a phosphoserine (S1050). A Phosphothreonine modification is found at T1063. Residue S1066 is modified to Phosphoserine. Residues 1129–1156 (SSPELPKPWGDGDLPLEEENPNSPQEEL) form a disordered region.

This sequence belongs to the TALPID3 family. As to quaternary structure, interacts with CCP110, CEP290, CEP97, KIF24. As to expression, ubiquitously expressed. Expressed in photoreceptor cells (at protein level).

The protein resides in the cytoplasm. The protein localises to the cytoskeleton. It is found in the microtubule organizing center. It localises to the centrosome. Its subcellular location is the photoreceptor inner segment. The protein resides in the centriole. The protein localises to the cilium basal body. Functionally, required for ciliogenesis and sonic hedgehog/SHH signaling. Required for the centrosomal recruitment of RAB8A and for the targeting of centriole satellite proteins to centrosomes such as of PCM1. May play a role in early ciliogenesis in the disappearance of centriolar satellites that preceeds ciliary vesicle formation. Involved in regulation of cell intracellular organization. Involved in regulation of cell polarity. Required for asymmetrical localization of CEP120 to daughter centrioles. The sequence is that of Protein TALPID3 (KIAA0586) from Homo sapiens (Human).